Reading from the N-terminus, the 304-residue chain is Triplex capsid protein 2 (304 aa).

This sequence belongs to the herpesviridae TRX2 protein family. Interacts with TRX1 and major capisd protein/MCP.

It localises to the virion. The protein resides in the host nucleus. Structural component of the T=16 icosahedral capsid. The capsid is composed of pentamers and hexamers of major capsid protein/MCP, which are linked together by heterotrimers called triplexes. These triplexes are formed by a single molecule of triplex protein 1/TRX1 and two copies of triplex protein 2/TRX2. Additionally, TRX1 is required for efficient transport of TRX2 to the nucleus, which is the site of capsid assembly. The chain is Triplex capsid protein 2 from Saimiri sciureus (Common squirrel monkey).